We begin with the raw amino-acid sequence, 142 residues long: MAYKHIGVAISGNEEDALLVNKALELARHNDAHLTLIHIDDGLSELYPGIYFPATEDILQLLKNKSDNKLYKLTKNIQWPKTKLRIERGEMPETLLEIMQKEQCDLLVCGHHHSFINRLMPAYRGMINKMSADLLIVPFIDK.

Belongs to the universal stress protein A family.

It is found in the cytoplasm. Its function is as follows. Required for resistance to DNA-damaging agents. The sequence is that of Universal stress protein D (uspD) from Escherichia coli (strain K12).